Reading from the N-terminus, the 26-residue chain is M-lycotoxin-Ls2a (26 aa).

In terms of tissue distribution, expressed by the venom gland.

The protein localises to the secreted. Its subcellular location is the target cell membrane. Forms pore that permeabilize the cell membrane. Promotes efflux of calcium from synaptosomes, causes hemolysis, and dissipates voltage gradients across muscle membrane. Potently inhibits the growth of bacteria and yeast. May function both in the prey capture strategy as well as protection from infectious organisms arising from prey ingestion. This chain is M-lycotoxin-Ls2a, found in Lycosa singoriensis (Wolf spider).